Consider the following 438-residue polypeptide: Proline--tRNA ligase (438 aa).

It belongs to the class-II aminoacyl-tRNA synthetase family. ProS type 2 subfamily. As to quaternary structure, homodimer.

It localises to the cytoplasm. It carries out the reaction tRNA(Pro) + L-proline + ATP = L-prolyl-tRNA(Pro) + AMP + diphosphate. Functionally, catalyzes the attachment of proline to tRNA(Pro) in a two-step reaction: proline is first activated by ATP to form Pro-AMP and then transferred to the acceptor end of tRNA(Pro). This chain is Proline--tRNA ligase, found in Rickettsia canadensis (strain McKiel).